A 420-amino-acid chain; its full sequence is Synaptosomal-associated protein 47 (420 aa).

T-SNARE coiled-coil homology domains lie at 110-172 and 357-419; these read AEAA…LTEL and TSEP…MKKL. The segment at 338–357 is disordered; the sequence is ATHCEPSSGSQEGRPLQLQT. Positions 342–357 are enriched in polar residues; that stretch reads EPSSGSQEGRPLQLQT.

The protein belongs to the SVAP1 family. In terms of assembly, forms a complex containing SNAP47, VAMP2 and STX1A. Associates with the BLOC-1 complex. Interacts with BLOC1S6.

The protein localises to the endomembrane system. Its subcellular location is the cytoplasm. The protein resides in the perinuclear region. Functionally, may play a role in intracellular membrane fusion. In Bos taurus (Bovine), this protein is Synaptosomal-associated protein 47 (SNAP47).